A 471-amino-acid polypeptide reads, in one-letter code: 5-hydroxytryptamine receptor 2A (471 aa).

The Extracellular portion of the chain corresponds to 1–80 (MDILCEENTS…LQEKNWSALL (80 aa)). Residues N8, N38, N44, N51, and N54 are each glycosylated (N-linked (GlcNAc...) asparagine). A helical transmembrane segment spans residues 81 to 97 (TAVVIILTIAGNILVIM). Topologically, residues 98 to 111 (AVSLEKKLQNATNY) are cytoplasmic. A helical transmembrane segment spans residues 112–137 (FLMSLAIADMLLGFLVMPVSMLTILY). Topologically, residues 138–146 (GYRWPLPSK) are extracellular. The helical transmembrane segment at 147–171 (LCAVWIYLDVLFSTASIMHLCAISL) threads the bilayer. A disulfide bridge links C148 with C227. A serotonin-binding site is contributed by D155. Residues 172–174 (DRY) carry the DRY motif; important for ligand-induced conformation changes motif. Residues 172–191 (DRYVAIQNPIHHSRFNSRTK) are Cytoplasmic-facing. A helical membrane pass occupies residues 192–215 (AFLKIIAVWTISVGISMPIPVFGL). The Extracellular segment spans residues 216–232 (QDDSKVFKEGSCLLADD). A helical transmembrane segment spans residues 233–258 (NFVLIGSFVSFFIPLTIMVITYFLTI). At 259–322 (KSLQKEATLC…QSISNEQKAC (64 aa)) the chain is on the cytoplasmic side. S280 is subject to Phosphoserine. A helical membrane pass occupies residues 323–348 (KVLGIVFFLFVVMWCPFFITNIMAVI). N343 contacts serotonin. An intrachain disulfide couples C349 to C353. At 349 to 356 (CKESCNED) the chain is on the extracellular side. The helical transmembrane segment at 357-382 (VIGALLNVFVWIGYLSSAVNPLVYTL) threads the bilayer. Positions 376–380 (NPLVY) match the NPxxY motif; important for ligand-induced conformation changes and signaling motif. Over 383 to 471 (FNKTYRSAFS…DGVNEKVSCV (89 aa)) the chain is Cytoplasmic. Over residues 451–465 (QHSEEASKDNSDGVN) the composition is skewed to basic and acidic residues. The disordered stretch occupies residues 451-471 (QHSEEASKDNSDGVNEKVSCV). The PDZ-binding signature appears at 469–471 (SCV).

The protein belongs to the G-protein coupled receptor 1 family. In terms of assembly, interacts (via C-terminus) with MPDZ and PATJ. May interact (via C-terminus) with MPP3, PRDX6, DLG4, DLG1, CASK, APBA1 and MAGI2. Interacts with GRM2 and DRD2; this may affect signaling. Detected in brain cortex (at protein level). Detected in blood platelets.

The protein resides in the cell membrane. Its subcellular location is the cell projection. The protein localises to the dendrite. It is found in the axon. It localises to the cytoplasmic vesicle. The protein resides in the membrane. Its subcellular location is the caveola. The protein localises to the presynapse. Its activity is regulated as follows. G-protein coupled receptor activity is regulated by lipids: oleamide increases HTR2A-mediated activity. Inhibited by IHCH-7179 small molecule: IHCH-7179 acts both as an agonist activator for HTR1A and as an antagonist inhibitor for HTR2A. In terms of biological role, G-protein coupled receptor for 5-hydroxytryptamine (serotonin). Also functions as a receptor for various drugs and psychoactive substances, including mescaline, psilocybin, 1-(2,5-dimethoxy-4-iodophenyl)-2-aminopropane (DOI) and lysergic acid diethylamide (LSD). Ligand binding causes a conformation change that triggers signaling via guanine nucleotide-binding proteins (G proteins) and modulates the activity of downstream effectors. HTR2A is coupled to G(q)/G(11) G alpha proteins and activates phospholipase C-beta, releasing diacylglycerol (DAG) and inositol 1,4,5-trisphosphate (IP3) second messengers that modulate the activity of phosphatidylinositol 3-kinase and promote the release of Ca(2+) ions from intracellular stores, respectively. Beta-arrestin family members inhibit signaling via G proteins and mediate activation of alternative signaling pathways. Affects neural activity, perception, cognition and mood. Plays a role in the regulation of behavior, including responses to anxiogenic situations and psychoactive substances. Plays a role in intestinal smooth muscle contraction, and may play a role in arterial vasoconstriction. Its function is as follows. (Microbial infection) Acts as a receptor for human JC polyomavirus/JCPyV. The sequence is that of 5-hydroxytryptamine receptor 2A from Homo sapiens (Human).